The primary structure comprises 229 residues: High molecular weight rubredoxin (229 aa).

The interval 1 to 158 is flavodoxin-reductase-like; that stretch reads MDTKALHTLT…YYHQVKRGTT (158 aa). Positions 178–229 constitute a Rubredoxin-like domain; that stretch reads SPKYQCTICNYVYDPVQGDPEHGIAPGTPFADLPEDWTCPICGAGKDAFEQI. C183, C186, C216, and C219 together coordinate Fe cation.

The protein in the N-terminal section; belongs to the flavodoxin reductase family. In terms of assembly, homodimer. Requires Fe cation as cofactor. The cofactor is FMN.

Has nitric oxide reductase activity in combination with FprA; probably involved in nitrosative stress protection. Acts as an NADH:FprA oxidoreductase. This Moorella thermoacetica (strain ATCC 39073 / JCM 9320) protein is High molecular weight rubredoxin (hrb).